A 121-amino-acid polypeptide reads, in one-letter code: N-alpha-acetyltransferase 38, NatC auxiliary subunit (121 aa).

Residues 40–113 (PGRRKLQKWL…IVSLSIDEPD (74 aa)) form the Sm domain.

Belongs to the snRNP Sm proteins family. In terms of assembly, component of the N-terminal acetyltransferase C (NatC) complex, which is composed of Naa35, Sbat/Naa38 and Naa30A. Interacts with Smn and Hez; along with Hez and Vlet, may form an accessory subcomplex involved in SMN complex function.

The protein localises to the cytoplasm. The protein resides in the nucleus. Its function is as follows. Auxiliary component of the N-terminal acetyltransferase C (NatC) complex which catalyzes acetylation of N-terminal methionine residues. May have an accessory function in the survival motor neuron (SMN) complex. The sequence is that of N-alpha-acetyltransferase 38, NatC auxiliary subunit from Drosophila melanogaster (Fruit fly).